Consider the following 78-residue polypeptide: UPF0154 protein SSU98_1719 (78 aa).

A helical transmembrane segment spans residues 3-23 (LGLAILLIVLAFAGGVALGIY).

It belongs to the UPF0154 family.

The protein localises to the cell membrane. This is UPF0154 protein SSU98_1719 from Streptococcus suis (strain 98HAH33).